A 378-amino-acid chain; its full sequence is Ribosomal RNA large subunit methyltransferase G (378 aa).

The protein belongs to the methyltransferase superfamily. RlmG family.

It localises to the cytoplasm. It carries out the reaction guanosine(1835) in 23S rRNA + S-adenosyl-L-methionine = N(2)-methylguanosine(1835) in 23S rRNA + S-adenosyl-L-homocysteine + H(+). Specifically methylates the guanine in position 1835 (m2G1835) of 23S rRNA. This is Ribosomal RNA large subunit methyltransferase G from Shewanella sp. (strain W3-18-1).